A 100-amino-acid chain; its full sequence is Elicitin Vex2 (100 aa).

Intrachain disulfides connect cysteine 3–cysteine 71, cysteine 27–cysteine 56, and cysteine 51–cysteine 95.

The protein belongs to the elicitin family.

Its subcellular location is the secreted. Induces local and distal defense responses (incompatible hypersensitive reaction) in plants from the solanaceae and cruciferae families. Elicits leaf necrosis and causes the accumulation of pathogenesis-related proteins. Might interact with the lipidic molecules of the plasma membrane. The sequence is that of Elicitin Vex2 from Phytopythium vexans (Damping-off fungus).